The sequence spans 316 residues: PDZ and LIM domain protein 3 (316 aa).

The region spanning 1-84 (MPQNVVLPGP…QLCLKIDRAE (84 aa)) is the PDZ domain. Phosphoserine occurs at positions 18 and 93. Omega-N-methylarginine is present on Arg-164. The LIM zinc-binding domain maps to 244–303 (PLCDKCGSGIVGAVVKARDKYRHPECFVCADCNLNLKQKGYFFVEGELYCETHARARTRP).

As to quaternary structure, interacts with ACTN2. Forms a heterodimer with PDLIM4 (via LIM domain).

Its subcellular location is the cytoplasm. The protein localises to the myofibril. The protein resides in the sarcomere. It localises to the z line. May play a role in the organization of actin filament arrays within muscle cells. The chain is PDZ and LIM domain protein 3 (Pdlim3) from Mus musculus (Mouse).